The sequence spans 819 residues: Pentatricopeptide repeat-containing protein At5g02860 (819 aa).

Positions 57 to 93 are disordered; it reads QNPNSRQPISSQTSRNRNRTRIGKSRDPNLGKPWSYH. PPR repeat units lie at residues 172–206, 207–241, 242–277, 278–312, 313–347, 348–382, 383–417, 418–452, 453–487, 488–522, 523–557, 558–592, 593–627, 628–662, 663–697, 698–732, 733–767, and 768–802; these read DNSV…GFSL, DVYS…GCKP, TLIT…GIAP, DAYT…GFSY, DKVT…GFSP, SIVT…GTKP, DVFT…GCKP, NICT…GLSP, DIVT…GFVP, ERET…GVTP, DLST…RCKP, NELT…VIEP, RAVL…GFSP, DITT…GFTP, SMAT…GIKP, DIIS…GIVP, DVIT…GCRP, and NQNT…DPHA.

This sequence belongs to the PPR family. P subfamily.

The sequence is that of Pentatricopeptide repeat-containing protein At5g02860 from Arabidopsis thaliana (Mouse-ear cress).